The chain runs to 257 residues: Phosphonates import ATP-binding protein PhnC (257 aa).

One can recognise an ABC transporter domain in the interval 4-248; sequence IKFKNVSKVY…VFSKIYGRTI (245 aa). Residue 37 to 44 coordinates ATP; that stretch reads GLSGAGKS.

Belongs to the ABC transporter superfamily. Phosphonates importer (TC 3.A.1.9.1) family. In terms of assembly, the complex is composed of two ATP-binding proteins (PhnC), two transmembrane proteins (PhnE) and a solute-binding protein (PhnD).

The protein localises to the cell membrane. It carries out the reaction phosphonate(out) + ATP + H2O = phosphonate(in) + ADP + phosphate + H(+). Its function is as follows. Part of the ABC transporter complex PhnCDE involved in phosphonates import. Responsible for energy coupling to the transport system. The protein is Phosphonates import ATP-binding protein PhnC of Staphylococcus aureus (strain MRSA252).